Reading from the N-terminus, the 847-residue chain is Protein SEY1 (847 aa).

Over 1 to 720 (MSSGEPLSET…KRSIVQHVTQ (720 aa)) the chain is Cytoplasmic. One can recognise a GB1/RHD3-type G domain in the interval 55–290 (GHNYHIVAVF…VENDIFKPEY (236 aa)). 65 to 72 (GSQSTGKS) contacts GTP. A helical membrane pass occupies residues 721–741 (IPYYIYIIILLLGWNEFMAVV). Topologically, residues 742 to 744 (RNP) are lumenal. The chain crosses the membrane as a helical span at residues 745–765 (FTFSLAIILGASLYILYTMNL). Residues 766–847 (LKPALTVTQR…VTSLNVVEEE (82 aa)) are Cytoplasmic-facing.

The protein belongs to the TRAFAC class dynamin-like GTPase superfamily. GB1/RHD3 GTPase family. RHD3 subfamily.

The protein resides in the endoplasmic reticulum membrane. Functionally, cooperates with the reticulon proteins and tubule-shaping DP1 family proteins to generate and maintain the structure of the tubular endoplasmic reticulum network. Has GTPase activity, which is required for its function in ER organization. The polypeptide is Protein SEY1 (Lodderomyces elongisporus (strain ATCC 11503 / CBS 2605 / JCM 1781 / NBRC 1676 / NRRL YB-4239) (Yeast)).